The primary structure comprises 344 residues: Dihydroorotate dehydrogenase (quinone) (344 aa).

FMN contacts are provided by residues 61–65 (AGLDK) and Thr85. Lys65 provides a ligand contact to substrate. 110–114 (NRMGF) is a binding site for substrate. 2 residues coordinate FMN: Asn138 and Asn171. Asn171 contacts substrate. Ser174 serves as the catalytic Nucleophile. Position 176 (Asn176) interacts with substrate. FMN-binding residues include Lys216 and Thr244. 245 to 246 (NT) lines the substrate pocket. FMN-binding positions include Gly267, Gly296, and 317-318 (YS).

This sequence belongs to the dihydroorotate dehydrogenase family. Type 2 subfamily. Monomer. Requires FMN as cofactor.

The protein localises to the cell membrane. It catalyses the reaction (S)-dihydroorotate + a quinone = orotate + a quinol. It participates in pyrimidine metabolism; UMP biosynthesis via de novo pathway; orotate from (S)-dihydroorotate (quinone route): step 1/1. In terms of biological role, catalyzes the conversion of dihydroorotate to orotate with quinone as electron acceptor. This Psychrobacter sp. (strain PRwf-1) protein is Dihydroorotate dehydrogenase (quinone).